Here is a 271-residue protein sequence, read N- to C-terminus: p-hydroxybenzoate hydroxylase transcriptional activator (271 aa).

Positions 23–83 (IAGLAKGLAL…TDEHYFWLTH (61 aa)) constitute an HTH iclR-type domain. A DNA-binding region (H-T-H motif) is located at residues 45–64 (VTQVAERTGISRTAARRYLK). The IclR-ED domain maps to 98-271 (LPKVAQSFLN…NTANELRNLV (174 aa)).

In terms of biological role, positive regulator of the pobA gene for p-hydroxybenzoate hydroxylase. The sequence is that of p-hydroxybenzoate hydroxylase transcriptional activator (pobR) from Acinetobacter baylyi (strain ATCC 33305 / BD413 / ADP1).